A 382-amino-acid polypeptide reads, in one-letter code: Regulatory protein RapC (382 aa).

TPR repeat units lie at residues 102 to 138 (YYVNFFRGMYEFDKREFISAITYYKQAEKKLSFVADH), 149 to 182 (AEAYYYMKQTYFSLINIKNAYEIYVEQETYNVRI), 183 to 216 (IQCHFVFGVNLMDERNFEQAARHFKLALNMAQAE), 223 to 256 (GRAYYNLGLCYYNQDLLDPAIDYFEKAVSTFESS), and 263 to 296 (PQAYFLITLIYYKQGKHDKASEYHKRGYEYAKET).

Belongs to the Rap family. Homodimer. Interacts specifically with the C-terminal DNA-binding domain of ComA. Interacts with CSF.

Its subcellular location is the cytoplasm. Its activity is regulated as follows. Inhibited by the competence and sporulation stimulating factor (CSF), encoded by phrC, which prevents RapC-ComA interaction. Its function is as follows. Involved in the regulation of genetic competence development. Inhibits the activity of ComA, a transcriptional factor that regulates the development of genetic competence. Acts by binding to ComA, independently of its phosphorylation state, leading to the inhibition of ComA DNA-binding activity. Does not dephosphorylate phospho-ComA and does not affect the phosphorylation level of the ComP-ComA system. This is Regulatory protein RapC (rapC) from Bacillus subtilis (strain 168).